Here is a 284-residue protein sequence, read N- to C-terminus: MAGCAARAPPGSEARLSLATFLLGASVLALPLLTRAGLQGRTGLALYVAGLNALLLLLYRPPRYQIAIRACFLGFVFGCGTLLSFSQSSWSHFGWYMCSLSLFHYSEYLVTAVNNPKSLSLDSFLLNHSLEYTVAALSSWLEFTLENIFWPELKQITWLSVTGLLMVVFGECLRKAAMFTAGSNFNHVVQNEKSDTHTLVTSGVYAWFRHPSYVGWFYWSIGTQVMLCNPICGVSYALTVWRFFRDRTEEEEISLIHFFGEEYLEYKKRVPTGLPFIKGVKVDL.

Topologically, residues 1-16 (MAGCAARAPPGSEARL) are cytoplasmic. A helical transmembrane segment spans residues 17–33 (SLATFLLGASVLALPLL). The Lumenal segment spans residues 34-41 (TRAGLQGR). The helical transmembrane segment at 42 to 59 (TGLALYVAGLNALLLLLY) threads the bilayer. Topologically, residues 60-69 (RPPRYQIAIR) are cytoplasmic. The chain crosses the membrane as a helical span at residues 70–87 (ACFLGFVFGCGTLLSFSQ). At 88-92 (SSWSH) the chain is on the lumenal side. The helical transmembrane segment at 93-112 (FGWYMCSLSLFHYSEYLVTA) threads the bilayer. The Cytoplasmic portion of the chain corresponds to 113-131 (VNNPKSLSLDSFLLNHSLE). A helical membrane pass occupies residues 132 to 149 (YTVAALSSWLEFTLENIF). Over 150–154 (WPELK) the chain is Lumenal. A helical membrane pass occupies residues 155–174 (QITWLSVTGLLMVVFGECLR). The Cytoplasmic segment spans residues 175–212 (KAAMFTAGSNFNHVVQNEKSDTHTLVTSGVYAWFRHPS). Residues Q190, 197–200 (HTLV), Y205, and 210–213 (HPSY) each bind S-adenosyl-L-methionine. A helical transmembrane segment spans residues 213 to 228 (YVGWFYWSIGTQVMLC). N229 is a topological domain (lumenal). A helical transmembrane segment spans residues 230–244 (PICGVSYALTVWRFF). At 245–284 (RDRTEEEEISLIHFFGEEYLEYKKRVPTGLPFIKGVKVDL) the chain is on the cytoplasmic side. Residue R247 coordinates substrate. E251 contributes to the S-adenosyl-L-methionine binding site.

It belongs to the class VI-like SAM-binding methyltransferase superfamily. Isoprenylcysteine carboxyl methyltransferase family. In terms of tissue distribution, ubiquitously expressed. Expressed at higher levels in the cerebellum and putamen than in other brain regions. Abundant expression seen in the Purkinje cells and pontine neurons.

The protein localises to the endoplasmic reticulum membrane. It carries out the reaction [protein]-C-terminal S-[(2E,6E)-farnesyl]-L-cysteine + S-adenosyl-L-methionine = [protein]-C-terminal S-[(2E,6E)-farnesyl]-L-cysteine methyl ester + S-adenosyl-L-homocysteine. Competitively inhibited by N-acetyl-S-trans,trans-farnesyl-l-cysteine (AFC). Functionally, catalyzes the post-translational methylation of isoprenylated C-terminal cysteine residues. The polypeptide is Protein-S-isoprenylcysteine O-methyltransferase (ICMT) (Homo sapiens (Human)).